A 1360-amino-acid chain; its full sequence is KN motif and ankyrin repeat domains 1 (1360 aa).

Residues 30-68 form a KN motif; Interaction with TLN1 region; the sequence is PYFVETPYGFQLDLDFVKYVDDIQKGNTIKKLNIQKRRK. The short motif at 41 to 44 is the Important for binding to TLN1 element; the sequence is LDLD. Positions 43–52 match the Nuclear export signal 1 (NES 1) motif; sequence LDFVKYVDDI. Positions 65–68 match the Nuclear localization signal 1 (NLS 1) motif; the sequence is KRRK. The disordered stretch occupies residues 66–103; sequence RRKPSVPCPEVRAIPGHQGVWTSTESLSSSNSDDSKQC. The span at 88–103 shows a compositional bias: low complexity; that stretch reads STESLSSSNSDDSKQC. The Nuclear export signal 2 (NES 2) signature appears at 125–134; it reads LETSPTFAVS. Phosphoserine is present on Ser186. Residues 221–253 form a disordered region; sequence DYNSYVPAAPTTSSMGSSVRHSPLSSGISTPVT. A compositionally biased stretch (polar residues) spans 230-253; the sequence is PTTSSMGSSVRHSPLSSGISTPVT. Residues 244 to 339 are interaction with PPFIBP1; that stretch reads LSSGISTPVT…SQLELLARAR (96 aa). Positions 260 to 311 form a coiled coil; it reads LQHIREQMAIALKRLKELEEQVRTIPVLQVKISVLQEEKRQLASQLKSQRAS. Ser325 is subject to Phosphoserine. Coiled-coil stretches lie at residues 367 to 394 and 453 to 487; these read FRQL…ELRE and ITEA…TTHD. Positions 618 to 627 match the Nuclear export signal 3 (NES 3) motif; it reads LTLLKTNLNL. Disordered stretches follow at residues 929–954 and 983–1053; these read SQPE…MQGS and IMKK…DTRG. Basic and acidic residues-rich tracts occupy residues 938–947 and 985–995; these read AEGKHSRGHE and KKSDGNKDSNG. Residues 985 to 998 carry the Nuclear localization signal 2 (NLS 2) motif; the sequence is KKSDGNKDSNGAKK. Over residues 1010–1025 the composition is skewed to low complexity; it reads ETTSSDESSSDGSSSS. Over residues 1026–1047 the composition is skewed to acidic residues; that stretch reads ESDDECDTIGYPPEEEEEEEEK. The interval 1081–1360 is interaction with KIF21A; the sequence is EPEKEEIRER…PGPTHRGSFD (280 aa). One copy of the ANK 0; degenerate repeat lies at 1117 to 1154; sequence KDMRICLNTLQHDWFRVSSQKSAVPAMVGDYIAAFEAV. ANK repeat units follow at residues 1169–1199, 1203–1236, 1241–1270, 1274–1306, and 1308–1337; these read NGNT…NVDH, AGYT…DVNA, AGQT…DVNI, EGST…HLED, and DGST…FSKA. Residues 1337 to 1360 form a disordered region; sequence AQSPSTPRLGRKTSPGPTHRGSFD.

In terms of assembly, part of a cortical microtubule stabilization complex (CMSC) composed of KANK1, PPFIA1, PPFIBP1, ERC1/ELKS, PHLDB2/LL5beta, CLASPs, KIF21A and possibly additional interactors; within CMSCs KANK1 and PHLDB2/LL5beta appear to be the core components for targeting of microtubule-binding proteins KIF21A and CLASPs, whereas PPFIA1, PPFIBP1 and ERC1/ELKS serve as scaffolds for protein clustering. Interacts (via KN motif) with TLN1 (via R7 domain); this mediates CMSC clustering around focal adhesions. Interacts (via CC1 domain, residues 244-339) with PPFIBP1. Interacts (via ANK repeats 1-5) with KIF21A (via residues 1142-1169). Interacts with YWHAQ; the interaction requires KANK1 phosphorylation at Ser-325 and is enhanced by growth factor stimulation. Interacts with YWHAB, YWHAG, YWHAE, YWHAH, YWHAZ and SFN; the interaction requires KANK1 phosphorylation at Ser-325. Interacts with ARFGEF1; however, colocalization cannot be experimentally confirmed. Interacts with BAIAP2. Interacts with CTNNB1. Interacts (via coiled coil domain) with DAAM1 (via coiled coil domain).

Its subcellular location is the cytoplasm. The protein localises to the cell cortex. It is found in the cell projection. It localises to the ruffle membrane. The protein resides in the nucleus. Adapter protein that links structural and signaling protein complexes positioned to guide microtubule and actin cytoskeleton dynamics during cell morphogenesis. At focal adhesions (FAs) rims, organizes cortical microtubule stabilizing complexes (CMSCs) and directly interacts with major FA component TLN1, forming macromolecular assemblies positioned to control microtubule-actin crosstalk at the cell edge. Recruits KIF21A in CMSCs at axonal growth cones and regulates axon guidance by suppressing microtubule growth without inducing microtubule disassembly once it reaches the cell cortex. Interacts with ARFGEF1 and participates in establishing microtubule-organizing center (MTOC) orientation and directed cell movement in wound healing. Regulates actin stress fiber formation and cell migration by inhibiting RHOA activation in response to growth factors; this function involves phosphorylation through PI3K/Akt signaling and may depend on the competitive interaction with 14-3-3 adapter proteins to sequester them from active complexes. Inhibits the formation of lamellipodia but not of filopodia; this function may depend on the competitive interaction with BAIAP2 to block its association with activated RAC1. Inhibits fibronectin-mediated cell spreading; this function is partially mediated by BAIAP2. In the nucleus, is involved in beta-catenin-dependent activation of transcription. During cell division, may regulate DAAM1-dependent RHOA activation that signals centrosome maturation and chromosomal segregation. May also be involved in contractile ring formation during cytokinesis. Potential tumor suppressor for renal cell carcinoma. This is KN motif and ankyrin repeat domains 1 from Mus musculus (Mouse).